An 899-amino-acid polypeptide reads, in one-letter code: Protein suppressor of hairy wing (899 aa).

Disordered stretches follow at residues 1–33 (MSAQ…RTGT), 45–127 (AAVA…KKMD), and 171–206 (AKEN…AKRR). Basic and acidic residues predominate over residues 21–31 (SDGDKPKEKRT). A compositionally biased stretch (low complexity) spans 45–55 (AAVASKGASVS). Polar residues-rich tracts occupy residues 67–83 (KILN…STKG) and 102–111 (RSSAPASSAV). Acidic residues predominate over residues 183 to 198 (VDEDDDDDDDDEDEGV). Residues 218–240 (HVCGKCYKTFRRVKSLKKHLEFC) form a C2H2-type 1; atypical zinc finger. A C2H2-type 2 zinc finger spans residues 288 to 311 (INCPDCPKSFKTQTSYERHIFITH). The segment at 318 to 340 (YPCSICNAKLRSGALLKLHEQQH) adopts a C2H2-type 3; atypical zinc-finger fold. C2H2-type zinc fingers lie at residues 347–365 (FACK…LKCH), 379–401 (MSCK…LKQH), 412–434 (YMCH…IRTH), 440–462 (FDCD…RRYH), 468–490 (YTCT…MKRH), 496–518 (HKCN…SKTH), 522–544 (YACS…VKDH), 552–576 (FACT…AGDH), and 594–617 (TDCA…RSVH). Disordered regions lie at residues 646–665 (EQKE…GSLI), 702–734 (PLEG…VVKK), and 865–899 (GDED…ESEA). Residues 874–899 (ETDKGKDREADNTDTDTREDAVESEA) show a composition bias toward basic and acidic residues.

The protein resides in the nucleus. Component of the gypsy chromatin insulator complex which is required for the function of the gypsy chromatin insulator and other endogenous chromatin insulators. Chromatin insulators are regulatory elements which establish independent domains of transcriptional activity within eukaryotic genomes. Insulators have two defining properties; they can block the communication between an enhancer and a promoter when placed between them and can also buffer transgenes from position effect variegation (PEV). Insulators are proposed to structure the chromatin fiber into independent domains of differing transcriptional potential by promoting the formation of distinct chromatin loops. This chromatin looping may involve the formation of insulator bodies, where homotypic interactions between individual subunits of the insulator complex could promote the clustering of widely spaced insulators at the nuclear periphery. Within the gypsy insulator complex, this protein binds specifically to a region of the gypsy element located 3' of the 5' long terminal repeat (LTR), and may also mediate interaction with other endogenous insulators at sites distinct from those recognized by Cp190. Cooperates with pita and cliff to recruit Cp190 and regulate insulator function at the front-ultraabdominal (Fub) boundary. This is Protein suppressor of hairy wing (su(Hw)) from Drosophila virilis (Fruit fly).